The following is a 752-amino-acid chain: MAP/microtubule affinity-regulating kinase 4 (752 aa).

Residues 1-36 (MSSRTVLAPGNDRNSDTHGTLGSGRSSDKGPSWSSR) are disordered. In terms of domain architecture, Protein kinase spans 59 to 310 (YRLLRTIGKG…LEQIMKDKWI (252 aa)). ATP-binding positions include 65–73 (IGKGNFAKV) and Lys-88. Asp-181 (proton acceptor) is an active-site residue. Thr-214 is modified (phosphothreonine; by LKB1). A UBA domain is found at 324-368 (EPEEDFGDTKRIEVMVGMGYTREEIKESLTSQKYNEVTATYLLLG). Positions 385–614 (ARVRAPSDTT…PAGRPRPTTN (230 aa)) are disordered. The segment covering 391-406 (SDTTNGTSSSKGTSHS) has biased composition (low complexity). 2 positions are modified to phosphoserine: Ser-423 and Ser-543. Residues 544-553 (PSSHSLAPPS) are compositionally biased toward low complexity. In terms of domain architecture, KA1 spans 703–752 (AGGPEPLSHFEVEVCQLPRPGLRGVLFRRVAGTALAFRTLVTRISNDLEL).

The protein belongs to the protein kinase superfamily. CAMK Ser/Thr protein kinase family. SNF1 subfamily. In terms of assembly, interacts with MAPT/TAU. Interacts with gamma-tubulin. Interacts with ODF2. Interacts with USP9X. Interacts with YWHAQ. Interacts with NLRP3; promoting NLRP3 recruitment to microtubule organizing center (MTOC). Requires Mg(2+) as cofactor. Ubiquitinated with 'Lys-29'- and 'Lys-33'-linked polyubiquitins which appear to impede LKB1-mediated phosphorylation. Deubiquitinated by USP9X. In terms of processing, phosphorylated at Thr-214 by STK11/LKB1 in complex with STE20-related adapter-alpha (STRADA) pseudo kinase and CAB39. Phosphorylated throughout the cell cycle. As to expression, ubiquitous. Isoform 2 is brain-specific. Expressed at highest levels in brain and testis. Also expressed in heart, lung, liver, muscle, kidney and spleen.

Its subcellular location is the cytoplasm. It is found in the cytoskeleton. The protein localises to the microtubule organizing center. It localises to the centrosome. The protein resides in the cilium basal body. Its subcellular location is the cilium axoneme. It is found in the cell projection. The protein localises to the dendrite. The enzyme catalyses L-seryl-[protein] + ATP = O-phospho-L-seryl-[protein] + ADP + H(+). The catalysed reaction is L-threonyl-[protein] + ATP = O-phospho-L-threonyl-[protein] + ADP + H(+). Its activity is regulated as follows. Activated by phosphorylation on Thr-214. In terms of biological role, serine/threonine-protein kinase. Phosphorylates the microtubule-associated protein MAPT/TAU. Also phosphorylates the microtubule-associated proteins MAP2 and MAP4. Involved in regulation of the microtubule network, causing reorganization of microtubules into bundles. Required for the initiation of axoneme extension during cilium assembly. Regulates the centrosomal location of ODF2 and phosphorylates ODF2 in vitro. Plays a role in cell cycle progression, specifically in the G1/S checkpoint. Reduces neuronal cell survival. Plays a role in energy homeostasis by regulating satiety and metabolic rate. Promotes adipogenesis by activating JNK1 and inhibiting the p38MAPK pathway, and triggers apoptosis by activating the JNK1 pathway. Phosphorylates mTORC1 complex member RPTOR and acts as a negative regulator of the mTORC1 complex, probably due to disruption of the interaction between phosphorylated RPTOR and the RRAGA/RRAGC heterodimer which is required for mTORC1 activation. Involved in NLRP3 positioning along microtubules by mediating NLRP3 recruitment to microtubule organizing center (MTOC) upon inflammasome activation. The sequence is that of MAP/microtubule affinity-regulating kinase 4 from Homo sapiens (Human).